Here is a 59-residue protein sequence, read N- to C-terminus: UPF0434 protein Pnec_0311 (59 aa).

The protein belongs to the UPF0434 family.

The chain is UPF0434 protein Pnec_0311 from Polynucleobacter necessarius subsp. necessarius (strain STIR1).